A 241-amino-acid chain; its full sequence is Ion-translocating oxidoreductase complex subunit E (241 aa).

Helical transmembrane passes span 22-42, 69-89, 91-111, 124-144, 157-177, and 182-202; these read LLGL…IGLG, IPIY…VIKA, AFNL…NCIV, VLVS…TMFL, LFFG…IEVL, and VFLL…VLAG.

The protein belongs to the NqrDE/RnfAE family. The complex is composed of six subunits: RnfA, RnfB, RnfC, RnfD, RnfE and RnfG.

It is found in the cell inner membrane. Its function is as follows. Part of a membrane-bound complex that couples electron transfer with translocation of ions across the membrane. This Buchnera aphidicola subsp. Baizongia pistaciae (strain Bp) protein is Ion-translocating oxidoreductase complex subunit E.